The primary structure comprises 210 residues: Small heat shock protein hspG6 (210 aa).

Positions 34–210 (KTIIDKLPPM…YSNTIKININ (177 aa)) constitute a sHSP domain. The tract at residues 93 to 151 (VIEKSTSSSTLDSKEDEPSIEEFEDDIKPKSKSDNTTVSTTTTATTKENKEDENKTKST) is disordered. The segment covering 126–138 (DNTTVSTTTTATT) has biased composition (low complexity). A compositionally biased stretch (basic and acidic residues) spans 139–151 (KENKEDENKTKST).

The protein belongs to the small heat shock protein (HSP20) family.

The chain is Small heat shock protein hspG6 (hspG6) from Dictyostelium discoideum (Social amoeba).